The sequence spans 149 residues: Large ribosomal subunit protein uL15 (149 aa).

The interval 14–57 (KQRKRVGRGSGSGWGCTSGKGNKGQNARSGGGVRPGFEGGQMPL) is disordered. 2 stretches are compositionally biased toward gly residues: residues 21 to 35 (RGSGSGWGCTSGKGN) and 42 to 52 (SGGGVRPGFEG).

It belongs to the universal ribosomal protein uL15 family. In terms of assembly, part of the 50S ribosomal subunit.

Its function is as follows. Binds to the 23S rRNA. The polypeptide is Large ribosomal subunit protein uL15 (Oleidesulfovibrio alaskensis (strain ATCC BAA-1058 / DSM 17464 / G20) (Desulfovibrio alaskensis)).